The chain runs to 520 residues: TnpB-like protein L770 (520 aa).

A disordered region spans residues 23–44; the sequence is KTKKKVFVKKKPPDKKPLKKPV. Zn(2+) is bound by residues C474, C477, C491, and C494.

In the central section; belongs to the transposase 2 family. It in the C-terminal section; belongs to the transposase 35 family.

In Acanthamoeba polyphaga mimivirus (APMV), this protein is TnpB-like protein L770.